A 357-amino-acid chain; its full sequence is UDP-N-acetylglucosamine--N-acetylmuramyl-(pentapeptide) pyrophosphoryl-undecaprenol N-acetylglucosamine transferase (357 aa).

UDP-N-acetyl-alpha-D-glucosamine-binding positions include T14–G16, N126, R162, S190, I246, A265–E270, and Q290.

The protein belongs to the glycosyltransferase 28 family. MurG subfamily.

The protein localises to the cell inner membrane. The enzyme catalyses di-trans,octa-cis-undecaprenyl diphospho-N-acetyl-alpha-D-muramoyl-L-alanyl-D-glutamyl-meso-2,6-diaminopimeloyl-D-alanyl-D-alanine + UDP-N-acetyl-alpha-D-glucosamine = di-trans,octa-cis-undecaprenyl diphospho-[N-acetyl-alpha-D-glucosaminyl-(1-&gt;4)]-N-acetyl-alpha-D-muramoyl-L-alanyl-D-glutamyl-meso-2,6-diaminopimeloyl-D-alanyl-D-alanine + UDP + H(+). It functions in the pathway cell wall biogenesis; peptidoglycan biosynthesis. Functionally, cell wall formation. Catalyzes the transfer of a GlcNAc subunit on undecaprenyl-pyrophosphoryl-MurNAc-pentapeptide (lipid intermediate I) to form undecaprenyl-pyrophosphoryl-MurNAc-(pentapeptide)GlcNAc (lipid intermediate II). This chain is UDP-N-acetylglucosamine--N-acetylmuramyl-(pentapeptide) pyrophosphoryl-undecaprenol N-acetylglucosamine transferase, found in Histophilus somni (strain 129Pt) (Haemophilus somnus).